A 388-amino-acid chain; its full sequence is Succinate--CoA ligase [ADP-forming] subunit beta (388 aa).

Positions 9–244 (KQLFAEYGLP…PSQDDPREAH (236 aa)) constitute an ATP-grasp domain. ATP is bound by residues Lys-46, 53-55 (GRG), Glu-99, Thr-102, and Glu-107. 2 residues coordinate Mg(2+): Asn-199 and Asp-213. Substrate is bound by residues Asn-264 and 321 to 323 (GIV).

It belongs to the succinate/malate CoA ligase beta subunit family. As to quaternary structure, heterotetramer of two alpha and two beta subunits. It depends on Mg(2+) as a cofactor.

It carries out the reaction succinate + ATP + CoA = succinyl-CoA + ADP + phosphate. It catalyses the reaction GTP + succinate + CoA = succinyl-CoA + GDP + phosphate. The protein operates within carbohydrate metabolism; tricarboxylic acid cycle; succinate from succinyl-CoA (ligase route): step 1/1. Its function is as follows. Succinyl-CoA synthetase functions in the citric acid cycle (TCA), coupling the hydrolysis of succinyl-CoA to the synthesis of either ATP or GTP and thus represents the only step of substrate-level phosphorylation in the TCA. The beta subunit provides nucleotide specificity of the enzyme and binds the substrate succinate, while the binding sites for coenzyme A and phosphate are found in the alpha subunit. This Pseudomonas syringae pv. syringae (strain B728a) protein is Succinate--CoA ligase [ADP-forming] subunit beta.